The sequence spans 645 residues: Chaperone protein DnaK (645 aa).

Thr-199 bears the Phosphothreonine; by autocatalysis mark. Disordered regions lie at residues 509–530 (GALSDSDIEQMQKDAEANAEED) and 615–645 (EAGADAAGAAGATAGGGDDDDAIDAEFEVKE). The span at 518–530 (QMQKDAEANAEED) shows a compositional bias: basic and acidic residues. The segment covering 615 to 626 (EAGADAAGAAGA) has biased composition (low complexity). Residues 631–645 (GDDDDAIDAEFEVKE) show a composition bias toward acidic residues.

This sequence belongs to the heat shock protein 70 family.

In terms of biological role, acts as a chaperone. The sequence is that of Chaperone protein DnaK from Rhodopirellula baltica (strain DSM 10527 / NCIMB 13988 / SH1).